A 357-amino-acid chain; its full sequence is DNA replication and repair protein RecF (357 aa).

31–38 lines the ATP pocket; sequence GQNGAGKT.

It belongs to the RecF family.

The protein localises to the cytoplasm. The RecF protein is involved in DNA metabolism; it is required for DNA replication and normal SOS inducibility. RecF binds preferentially to single-stranded, linear DNA. It also seems to bind ATP. The chain is DNA replication and repair protein RecF from Coxiella burnetii (strain CbuK_Q154) (Coxiella burnetii (strain Q154)).